Consider the following 1066-residue polypeptide: Protein sts5 (1066 aa).

Residues 18–28 show a composition bias toward low complexity; the sequence is QQDPSDAQSSP. Disordered stretches follow at residues 18–40, 154–178, and 247–286; these read QQDP…SLTT, ATST…SPNS, and SNFR…RKNL. Polar residues predominate over residues 29–40; that stretch reads TFVPSANPSLTT. T157 is modified (phosphothreonine). Low complexity predominate over residues 168–178; the sequence is HSVASVSSPNS. Residue T262 is modified to Phosphothreonine. S264 is subject to Phosphoserine. Residues 270–280 are compositionally biased toward gly residues; that stretch reads SGSGFSSGGSG. Phosphothreonine is present on T377. The segment at 454-480 is disordered; that stretch reads SSAANKERQTSSGNQGSSNNSGNDKPK. The segment covering 464–476 has biased composition (low complexity); it reads SSGNQGSSNNSGN. The CSD2 domain maps to 482–556; the sequence is VWFKPSDKRV…AQVSALLHDT (75 aa). One can recognise an RNB domain in the interval 618–934; it reads NINSSSATDF…VHYQLQLLLR (317 aa). The region spanning 983–1033 is the DIS3L2 C-terminal domain; the sequence is QDGLVCFVAPSYFDVFFPSLGMEKRVHLDLLNLTHVRFEEDQGILSLYDES.

It belongs to the RNR ribonuclease family. Interacts with serine/threonine phosphatase ppe1, protein kinase C and an osmosensing MAP kinase.

The protein resides in the cytoplasm. In terms of biological role, required for the maintenance of cell shape during interphase. Required for localization of cortical actin to the growing tips before mitosis. This chain is Protein sts5 (sts5), found in Schizosaccharomyces pombe (strain 972 / ATCC 24843) (Fission yeast).